We begin with the raw amino-acid sequence, 333 residues long: Aquaporin-1 (333 aa).

Residues 1-26 form a disordered region; sequence MQKMSEKPLYRAAENPTRNADRRAGR. Transmembrane regions (helical) follow at residues 85–105 and 116–136; these read LAMF…HFTG and FHGF…GGII. The NPA 1 motif lies at 137–139; the sequence is NPA. The next 3 helical transmembrane spans lie at 156–176, 213–233, and 245–265; these read LVLV…VYLI, TGAI…FLSI, and LFPF…SYSA. Residues 270-272 carry the NPA 2 motif; it reads NPA. The helical transmembrane segment at 303-323 threads the bilayer; that stretch reads WLFPYVGALFGAVMYQIFVGV.

The protein belongs to the MIP/aquaporin (TC 1.A.8) family.

The protein resides in the cell membrane. Functionally, aquaglyceroporin that may modulate the water content and osmolytes during anhydrobiosis. The chain is Aquaporin-1 from Milnesium tardigradum (Water bear).